Consider the following 204-residue polypeptide: Protease (204 aa).

Active-site residues include His53, Asp70, and Cys121.

The protein belongs to the peptidase C5 family. In terms of assembly, interacts with protease cofactor pVI-C; this interaction is necessary for protease activation.

The protein resides in the virion. Its subcellular location is the host nucleus. The enzyme catalyses Cleaves proteins of the adenovirus and its host cell at two consensus sites: -Yaa-Xaa-Gly-Gly-|-Xaa- and -Yaa-Xaa-Gly-Xaa-|-Gly- (in which Yaa is Met, Ile or Leu, and Xaa is any amino acid).. Requires DNA and protease cofactor for maximal activation. Inside nascent virions, becomes partially activated by binding to the viral DNA, allowing it to cleave the cofactor that binds to the protease and fully activates it. Actin, like the viral protease cofactor, seems to act as a cofactor in the cleavage of cytokeratin 18 and of actin itself. Its function is as follows. Cleaves viral precursor proteins (pTP, pIIIa, pVI, pVII, pVIII, and pX) inside newly assembled particles giving rise to mature virions. Protease complexed to its cofactor slides along the viral DNA to specifically locate and cleave the viral precursors. Mature virions have a weakened organization compared to the unmature virions, thereby facilitating subsequent uncoating. Without maturation, the particle lacks infectivity and is unable to uncoat. Late in adenovirus infection, in the cytoplasm, may participate in the cytoskeleton destruction. Cleaves host cell cytoskeletal keratins K7 and K18. The protein is Protease of Porcine adenovirus A serotype 3 (PAdV-3).